The sequence spans 214 residues: UPF0301 protein NFA_55110 (214 aa).

The disordered stretch occupies residues 1–24 (MARADDPDERKTQGGHGDRRRREF).

Belongs to the UPF0301 (AlgH) family.

The protein is UPF0301 protein NFA_55110 of Nocardia farcinica (strain IFM 10152).